The following is a 420-amino-acid chain: MKTLIARHKAGEHIGICSVCSAHPLVIEAALAFDRNSTRKVLIEATSNQVNQFGGYTGMTPADFREFVFTIADKVGFARERIILGGDHLGPNCWQQENADAAMEKSVELVKEYVRAGFSKIHLDASMSCAGDPIPLAPETVAERAAVLCFAAESVATDCQREQLSYVIGTEVPVPGGEASAIQSVHITHVEDAANTLRTHQKAFIARGLTEALTRVIAIVVQPGVEFDHSNIIHYQPQEAQPLAQWIENTRMVYEAHSTDYQTRTAYWELVRDHFAILKVGPALTFALREAIFALAQIEQELIAPENRSGCLAVIEEVMLDEPQYWKKYYRTGFNDSLLDIRYSLSDRIRYYWPHSRIKNSVETMMVNLEGVDIPLGMISQYLPKQFERIQSGELSAIPHQLIMDKIYDVLRAYRYGCAE.

The protein belongs to the GatZ/KbaZ family. GatZ subfamily. As to quaternary structure, forms a complex with GatY.

The protein operates within carbohydrate metabolism; D-tagatose 6-phosphate degradation; D-glyceraldehyde 3-phosphate and glycerone phosphate from D-tagatose 6-phosphate: step 2/2. In terms of biological role, component of the tagatose-1,6-bisphosphate aldolase GatYZ that is required for full activity and stability of the Y subunit. Could have a chaperone-like function for the proper and stable folding of GatY. When expressed alone, GatZ does not show any aldolase activity. Is involved in the catabolism of galactitol. This is D-tagatose-1,6-bisphosphate aldolase subunit GatZ from Escherichia coli O139:H28 (strain E24377A / ETEC).